Here is a 131-residue protein sequence, read N- to C-terminus: Small ribosomal subunit protein uS11 (131 aa).

It belongs to the universal ribosomal protein uS11 family. In terms of assembly, part of the 30S ribosomal subunit. Interacts with proteins S7 and S18. Binds to IF-3.

Located on the platform of the 30S subunit, it bridges several disparate RNA helices of the 16S rRNA. Forms part of the Shine-Dalgarno cleft in the 70S ribosome. This chain is Small ribosomal subunit protein uS11, found in Endomicrobium trichonymphae.